Consider the following 422-residue polypeptide: Dioxygenase str8 (422 aa).

Zn(2+) is bound by residues cysteine 73, cysteine 75, cysteine 78, and histidine 119. Residues histidine 243, aspartate 245, and histidine 382 each contribute to the Fe cation site.

The protein belongs to the gamma-BBH/TMLD family. The cofactor is Fe(2+).

It functions in the pathway mycotoxin biosynthesis. Dioxygenase; part of the gene cluster that mediates the biosynthesis of strobilurin A, an antifungal polyketide that contains a key beta-methoxyacrylate toxophore that targets the complex III of the mitochondrial electron transport chain. Strobilurin biosynthesis begins with construction of benzoyl CoA by step-wise elimination of ammonia from phenylalanine by the phenylalanine ammonia-lyase str11, oxygenation by str8 and retro-Claisen reaction to form benzoic acid, which is activated to its CoA thiolester benzoyl CoA by the dedicated CoA ligase str10. Benzoyl CoA forms the starter unit for the highly reducing polyketide synthase stpks1 that produces the polyketide prestrobilutin A. The FAD-dependent oxygenase str9 then catalyzes the key oxidative rearrangement responsible for the creation of the beta-methoxyacrylate toxophore. Str9 performs epoxidation of the 2,3 olefin of prestrobilutin A, followed by Meinwald rearrangement to furnish the aldehyde intermediate. Rapid enolization of the aldehyde intermediate would give the beta-methoxyacrylate skeleton and methylations catalyzed by str2 and str3 complete the synthesis and lead to the production of strobilurin A. The short-chain dehydrogenase stl2 and the dehydrogenase str4 play a role in the shunt pathway leading to the production of bolineol. The cluster encodes no obvious halogenase gene that could be involved in production of strobilurin B, nor any obvious dimethylallyl-transferase that could be involved in the production of strobilurin G. It is possible that unknown proteins encoded in, or near, the cluster (such as str1 or stl1) may form new classes of halogenases or dimethylally-transferases, or that the responsible genes are located elsewhere on the genome. Similarly, proteins encoded by str5/str6 hydrolases appear to have no chemical role in the biosynthesis of strobilurin A. Finally, no obvious self-resistance gene is found within the cluster. In Strobilurus tenacellus, this protein is Dioxygenase str8.